The following is a 318-amino-acid chain: SPX domain-containing protein 4 (318 aa).

Residues Met1–Gln187 form the SPX domain. Low complexity predominate over residues Ser226 to His237. 2 disordered regions span residues Ser226–Ser247 and Ser284–His318. A compositionally biased stretch (basic and acidic residues) spans Asn305–His318.

This is SPX domain-containing protein 4 (SPX4) from Arabidopsis thaliana (Mouse-ear cress).